Reading from the N-terminus, the 548-residue chain is Probable 2,3-bisphosphoglycerate-independent phosphoglycerate mutase (548 aa).

Positions 20 and 73 each coordinate Mn(2+). The active-site Phosphoserine intermediate is the serine 73. Substrate is bound by residues histidine 134, 164 to 165 (RD), arginine 200, arginine 207, 279 to 282 (RGDR), and lysine 354. Residues aspartate 422, histidine 426, aspartate 463, histidine 464, and histidine 493 each contribute to the Mn(2+) site.

Belongs to the BPG-independent phosphoglycerate mutase family. As to quaternary structure, monomer. Mn(2+) is required as a cofactor.

The enzyme catalyses (2R)-2-phosphoglycerate = (2R)-3-phosphoglycerate. Its pathway is carbohydrate degradation; glycolysis; pyruvate from D-glyceraldehyde 3-phosphate: step 3/5. Functionally, catalyzes the interconversion of 2-phosphoglycerate and 3-phosphoglycerate. The polypeptide is Probable 2,3-bisphosphoglycerate-independent phosphoglycerate mutase (gpmI) (Leptospira interrogans serogroup Icterohaemorrhagiae serovar Lai (strain 56601)).